Consider the following 365-residue polypeptide: 3-dehydroquinate synthase (365 aa).

NAD(+) contacts are provided by residues 107–111 (GVIGD), 131–132 (TT), K144, and K153. Positions 186, 251, and 268 each coordinate Zn(2+).

The protein belongs to the sugar phosphate cyclases superfamily. Dehydroquinate synthase family. Co(2+) is required as a cofactor. It depends on Zn(2+) as a cofactor. Requires NAD(+) as cofactor.

It is found in the cytoplasm. It catalyses the reaction 7-phospho-2-dehydro-3-deoxy-D-arabino-heptonate = 3-dehydroquinate + phosphate. The protein operates within metabolic intermediate biosynthesis; chorismate biosynthesis; chorismate from D-erythrose 4-phosphate and phosphoenolpyruvate: step 2/7. Catalyzes the conversion of 3-deoxy-D-arabino-heptulosonate 7-phosphate (DAHP) to dehydroquinate (DHQ). This chain is 3-dehydroquinate synthase, found in Picosynechococcus sp. (strain ATCC 27264 / PCC 7002 / PR-6) (Agmenellum quadruplicatum).